Reading from the N-terminus, the 136-residue chain is Large ribosomal subunit protein bL20c (136 aa).

Belongs to the bacterial ribosomal protein bL20 family.

Its subcellular location is the plastid. It is found in the chloroplast. In terms of biological role, binds directly to 23S ribosomal RNA and is necessary for the in vitro assembly process of the 50S ribosomal subunit. It is not involved in the protein synthesizing functions of that subunit. The chain is Large ribosomal subunit protein bL20c from Huperzia lucidula (Shining clubmoss).